The chain runs to 404 residues: Phosphoribulokinase, chloroplastic (404 aa).

The N-terminal 53 residues, 1-53 (MAFCSPHTTTSLRSPCTTIPNSGFRQNQVIFFTTRSSRRSNTRHGARTFQVSC), are a transit peptide targeting the chloroplast. The cysteines at positions 69 and 108 are disulfide-linked.

Belongs to the phosphoribulokinase family.

The protein localises to the plastid. It localises to the chloroplast. It carries out the reaction D-ribulose 5-phosphate + ATP = D-ribulose 1,5-bisphosphate + ADP + H(+). Its pathway is carbohydrate biosynthesis; Calvin cycle. Light regulated via thioredoxin by reversible oxidation/reduction of sulfhydryl/disulfide groups. The polypeptide is Phosphoribulokinase, chloroplastic (Triticum aestivum (Wheat)).